Here is an 889-residue protein sequence, read N- to C-terminus: 97 kDa heat shock protein (889 aa).

Disordered regions lie at residues 504 to 622 and 812 to 889; these read EDAM…ATTD and FVCD…MELD. Residues 549 to 585 are compositionally biased toward basic and acidic residues; it reads SADKEEQADNGSKETSKDSKDQTSESSKSDKESKDQN. Over residues 586–597 the composition is skewed to polar residues; the sequence is SEGSKSDNSSTE. Over residues 869-889 the composition is skewed to basic and acidic residues; that stretch reads ASKEGETKPDETKPDVEMELD.

Belongs to the heat shock protein 70 family.

In terms of biological role, cell surface recognition protein that binds acrosome-reacted sperm and thereby mediates binding and subsequent fusion of the sperm and egg. In Strongylocentrotus purpuratus (Purple sea urchin), this protein is 97 kDa heat shock protein.